The sequence spans 297 residues: MSNWLVDKLIPSIMRSEVKKSSVPEGLWHKCPSCEAVLYRPELEKTLDVCPKCNHHMRIGARARIDIFLDKDGRAELGADLEPVDRLKFRDGKKYKDRLTAAQKQTGEKDALISMSGNLMGLPVVVSAFEFSFMGGSMGAIVGERFVRAANYALENRCPMICFSASGGARMQEALISLMQMAKTSAVLARLREEGIPFISVLTDPVYGGVSASLAMLGDVIVGEPKALIGFAGPRVIEQTVREKLPEGFQRSEFLLEHGAIDLIISRDELRPRLARLLAQMTGQPTPEAAKEVAAVA.

In terms of domain architecture, CoA carboxyltransferase N-terminal spans L27 to V296. The Zn(2+) site is built by C31, C34, C50, and C53. A C4-type zinc finger spans residues C31–C53.

This sequence belongs to the AccD/PCCB family. In terms of assembly, acetyl-CoA carboxylase is a heterohexamer composed of biotin carboxyl carrier protein (AccB), biotin carboxylase (AccC) and two subunits each of ACCase subunit alpha (AccA) and ACCase subunit beta (AccD). It depends on Zn(2+) as a cofactor.

The protein resides in the cytoplasm. It catalyses the reaction N(6)-carboxybiotinyl-L-lysyl-[protein] + acetyl-CoA = N(6)-biotinyl-L-lysyl-[protein] + malonyl-CoA. Its pathway is lipid metabolism; malonyl-CoA biosynthesis; malonyl-CoA from acetyl-CoA: step 1/1. Component of the acetyl coenzyme A carboxylase (ACC) complex. Biotin carboxylase (BC) catalyzes the carboxylation of biotin on its carrier protein (BCCP) and then the CO(2) group is transferred by the transcarboxylase to acetyl-CoA to form malonyl-CoA. In Pseudomonas entomophila (strain L48), this protein is Acetyl-coenzyme A carboxylase carboxyl transferase subunit beta.